The sequence spans 166 residues: Phospholipase A2 inhibitor B1 (166 aa).

An N-terminal signal peptide occupies residues 1 to 19 (MRLILLSGLLLLGTFLVNG). Positions 46 to 161 (LFHAFLTVHK…CDDNLLVVCE (116 aa)) constitute a C-type lectin domain. 2 cysteine pairs are disulfide-bonded: cysteine 83/cysteine 160 and cysteine 138/cysteine 152. Asparagine 122 carries N-linked (GlcNAc...) asparagine glycosylation.

Belongs to the alpha-type phospholipase A2 inhibitor family. Homotrimer; non-covalently linked. Expressed by the liver.

It is found in the secreted. This phospholipase A2 inhibitor binds directly phospholipase A2 in the presence or absence of calcium. This Crotalus durissus terrificus (South American rattlesnake) protein is Phospholipase A2 inhibitor B1.